A 224-amino-acid chain; its full sequence is uncharacterized protein (224 aa).

3 N-linked (GlcNAc...) asparagine glycosylation sites follow: asparagine 10, asparagine 70, and asparagine 74.

It localises to the endoplasmic reticulum. This is an uncharacterized protein from Saccharomyces cerevisiae (strain ATCC 204508 / S288c) (Baker's yeast).